Consider the following 162-residue polypeptide: Zinc finger protein ZAT12 (162 aa).

2 C2H2-type zinc fingers span residues 39-61 (FTCK…RASH) and 82-104 (HPCP…MRRH).

In terms of tissue distribution, expressed in roots, stems and flowers.

Its subcellular location is the nucleus. Transcriptional repressor involved in light acclimation, cold and oxidative stress responses. May regulate a collection of transcripts involved in response to high-light, cold and oxidative stress. This is Zinc finger protein ZAT12 (ZAT12) from Arabidopsis thaliana (Mouse-ear cress).